A 515-amino-acid polypeptide reads, in one-letter code: Bifunctional purine biosynthesis protein PurH (515 aa).

An MGS-like domain is found at M1–V145.

Belongs to the PurH family.

The catalysed reaction is (6R)-10-formyltetrahydrofolate + 5-amino-1-(5-phospho-beta-D-ribosyl)imidazole-4-carboxamide = 5-formamido-1-(5-phospho-D-ribosyl)imidazole-4-carboxamide + (6S)-5,6,7,8-tetrahydrofolate. It catalyses the reaction IMP + H2O = 5-formamido-1-(5-phospho-D-ribosyl)imidazole-4-carboxamide. It participates in purine metabolism; IMP biosynthesis via de novo pathway; 5-formamido-1-(5-phospho-D-ribosyl)imidazole-4-carboxamide from 5-amino-1-(5-phospho-D-ribosyl)imidazole-4-carboxamide (10-formyl THF route): step 1/1. The protein operates within purine metabolism; IMP biosynthesis via de novo pathway; IMP from 5-formamido-1-(5-phospho-D-ribosyl)imidazole-4-carboxamide: step 1/1. This is Bifunctional purine biosynthesis protein PurH from Streptococcus uberis (strain ATCC BAA-854 / 0140J).